The sequence spans 142 residues: Interleukin-3 (142 aa).

Residues 1–18 (MSHLPILLLLLLVSPGLQ) form the signal peptide. N-linked (GlcNAc...) asparagine glycosylation is found at N33, N88, and N108. The cysteines at positions 34 and 102 are disulfide-linked.

Belongs to the IL-3 family. As to quaternary structure, monomer. In terms of tissue distribution, activated T-cells, mast cells, natural killer cells.

The protein resides in the secreted. In terms of biological role, granulocyte/macrophage colony-stimulating factors are cytokines that act in hematopoiesis by controlling the production, differentiation, and function of 2 related white cell populations of the blood, the granulocytes and the monocytes-macrophages. Its function is as follows. This CSF induces granulocytes, macrophages, mast cells, stem cells, erythroid cells, eosinophils and megakaryocytes. In Saguinus oedipus (Cotton-top tamarin), this protein is Interleukin-3 (IL3).